The chain runs to 504 residues: Sodium-coupled neutral amino acid transporter 3 (504 aa).

Ser52 bears the Phosphoserine; by PKC mark. The N-linked (GlcNAc...) asparagine glycan is linked to Asn73. A run of 5 helical transmembrane segments spans residues 82 to 102 (GILGLAYAMANTGIILFLFLL), 105 to 125 (VALLSSYSIHLLLKSSGIVGI), 143 to 163 (AAALAITLQNIGAMSSYLYII), 186 to 206 (MDGNYLVILVSVIIILPLALM), and 212 to 232 (LGYSSGFSLSCMVFFLIAVIY). An intrachain disulfide couples Cys239 to Cys275. N-linked (GlcNAc...) asparagine glycosylation is found at Asn247 and Asn251. A helical membrane pass occupies residues 287–307 (AYTIPIMAFAFVCHPEVLPIY). The N-linked (GlcNAc...) asparagine glycan is linked to Asn323. Helical transmembrane passes span 324–344 (LSIAVMYVMYFLAALFGYLTF), 366–386 (ILCVRVAVLIAVTLTVPIVLF), 408–428 (VLIATGLLTCINLLVIFAPNI), 431–451 (IFGIIGATSAPCLIFIFPAIF), and 469–489 (ILALCFAAVGFLLMTMSLSFI).

The protein belongs to the amino acid/polyamine transporter 2 family. Post-translationally, phosphorylation at Ser-52 induces internalization and sequestration into an intracellular reservoir. During dephosphorylation by protein phosphatases, can recycle back to the plasma membrane and regain activity. Prolonged phosphorylation results in its degradation. In terms of tissue distribution, highly expressed in liver. Expressed in skeletal muscle. Expressed in kidney, heart and brain. Not detected in gut, lung or spleen. Expressed ubiquitously in hepatocytes in liver whereas in kidney expression is restricted to the medulla. Within brain, expressed in glial cells. In the cerebellum, expressed on Bergmann glial fibers in the molecular layer and astrocytes in the granule layer. Expressed in brain kidney and liver (at protein level). In the adult kidney, highly expressed in the outer strip of the outer medulla and medullary rays penetrating into the kidney cortex (at protein level).

Its subcellular location is the cell membrane. The protein localises to the basolateral cell membrane. The enzyme catalyses L-glutamine(out) + Na(+)(out) + H(+)(in) = L-glutamine(in) + Na(+)(in) + H(+)(out). It catalyses the reaction L-asparagine(out) + Na(+)(out) + H(+)(in) = L-asparagine(in) + Na(+)(in) + H(+)(out). It carries out the reaction L-histidine(out) + Na(+)(out) + H(+)(in) = L-histidine(in) + Na(+)(in) + H(+)(out). L-glutamine efflux and L-glutamine uptake are regulated by CO2/HCO3(-) through SLC4A4 leading to modulation of cytosolic pH and Na(+)concentration. In terms of biological role, symporter that cotransports specific neutral amino acids and sodium ions, coupled to an H(+) antiporter activity. Mainly participates in the glutamate-GABA-glutamine cycle in brain where it transports L-glutamine from astrocytes in the intercellular space for the replenishment of both neurotransmitters glutamate and gamma-aminobutyric acid (GABA) in neurons. Also functions as the major influx transporter in ganglion cells mediating the uptake of glutamine. The transport activity is specific for L-glutamine, L-histidine and L-asparagine. The transport is electroneutral coupled to the cotransport of 1 Na(+) and the antiport of 1 H(+), pH dependent, saturable, Li(+) tolerant and functions in both direction depending on the concentration gradients of its substrates and cotransported ions. Also mediates an amino acid-gated H(+) conductance that is not stoichiometrically coupled to the amino acid transport but which influences the ionic gradients that drive the amino acid transport. In addition, may play a role in nitrogen metabolism, amino acid homeostasis, glucose metabolism and renal ammoniagenesis. The chain is Sodium-coupled neutral amino acid transporter 3 from Rattus norvegicus (Rat).